We begin with the raw amino-acid sequence, 145 residues long: Probable disulfide formation protein (145 aa).

Residues 9 to 28 (ENLLLLIWVQAFLALAGSLF) traverse the membrane as a helical segment. An intrachain disulfide couples Cys38 to Cys41. Transmembrane regions (helical) follow at residues 43–62 (YQRILMYPLVLIYGVAAIKK) and 69–86 (PGLFMSGIGLLVSTYHYL). A disulfide bridge connects residues Cys100 and Cys106. The helical transmembrane segment at 115–137 (GFISIPFMAGVAFLIIFVLHLLI) threads the bilayer.

The protein belongs to the DsbB family. BdbC subfamily.

It localises to the cell membrane. In terms of biological role, required for disulfide bond formation in some proteins. This is Probable disulfide formation protein from Oceanobacillus iheyensis (strain DSM 14371 / CIP 107618 / JCM 11309 / KCTC 3954 / HTE831).